The sequence spans 220 residues: Probable GTP-binding protein EngB (220 aa).

The EngB-type G domain occupies 41–219; it reads DRSEVCFAGR…RAEIAALAML (179 aa). GTP contacts are provided by residues 49 to 56, 76 to 80, 96 to 99, 164 to 167, and 197 to 200; these read GRSNVGKS, GRTRE, DLPG, TKVD, and MTSA. Ser56 and Thr78 together coordinate Mg(2+).

The protein belongs to the TRAFAC class TrmE-Era-EngA-EngB-Septin-like GTPase superfamily. EngB GTPase family. The cofactor is Mg(2+).

In terms of biological role, necessary for normal cell division and for the maintenance of normal septation. This chain is Probable GTP-binding protein EngB, found in Hyphomonas neptunium (strain ATCC 15444).